The chain runs to 575 residues: Arginine--tRNA ligase (575 aa).

The short motif at 131–141 (ANPNGPLHIGH) is the 'HIGH' region element.

The protein belongs to the class-I aminoacyl-tRNA synthetase family.

The protein resides in the cytoplasm. It carries out the reaction tRNA(Arg) + L-arginine + ATP = L-arginyl-tRNA(Arg) + AMP + diphosphate. The polypeptide is Arginine--tRNA ligase (Methanobrevibacter smithii (strain ATCC 35061 / DSM 861 / OCM 144 / PS)).